A 160-amino-acid chain; its full sequence is Transmembrane protein 220 (160 aa).

A run of 5 helical transmembrane segments spans residues 3–23, 30–50, 62–82, 100–120, and 125–145; these read PALW…AALV, AEVW…VGLN, ISAI…SYLL, GLVI…NPVG, and LAIA…IYIN.

The protein resides in the membrane. This Homo sapiens (Human) protein is Transmembrane protein 220 (TMEM220).